Reading from the N-terminus, the 75-residue chain is Small ribosomal subunit protein bS21 (75 aa).

A disordered region spans residues 52–75 (RRARKLARKRAQREGLIGGRPGAR). The span at 53-62 (RARKLARKRA) shows a compositional bias: basic residues.

Belongs to the bacterial ribosomal protein bS21 family.

This Brucella anthropi (strain ATCC 49188 / DSM 6882 / CCUG 24695 / JCM 21032 / LMG 3331 / NBRC 15819 / NCTC 12168 / Alc 37) (Ochrobactrum anthropi) protein is Small ribosomal subunit protein bS21.